A 114-amino-acid polypeptide reads, in one-letter code: Hydrogenase maturation factor HypA (114 aa).

Residue His2 participates in Ni(2+) binding. Zn(2+)-binding residues include Cys73, Cys76, Cys89, and Cys92.

It belongs to the HypA/HybF family.

Involved in the maturation of [NiFe] hydrogenases. Required for nickel insertion into the metal center of the hydrogenase. The chain is Hydrogenase maturation factor HypA from Azoarcus sp. (strain BH72).